Consider the following 881-residue polypeptide: Valine--tRNA ligase (881 aa).

The 'HIGH' region motif lies at 76 to 86 (PTVSGSLHIGH). The interval 493–526 (DSPILPDESQLPVDPSSQAPEGYTEDQRGKPGGF) is disordered. The 'KMSKS' region motif lies at 608 to 612 (KMSKS). Lys-611 is a binding site for ATP.

This sequence belongs to the class-I aminoacyl-tRNA synthetase family. ValS type 2 subfamily. As to quaternary structure, monomer.

The protein resides in the cytoplasm. It carries out the reaction tRNA(Val) + L-valine + ATP = L-valyl-tRNA(Val) + AMP + diphosphate. In terms of biological role, catalyzes the attachment of valine to tRNA(Val). As ValRS can inadvertently accommodate and process structurally similar amino acids such as threonine, to avoid such errors, it has a 'posttransfer' editing activity that hydrolyzes mischarged Thr-tRNA(Val) in a tRNA-dependent manner. The polypeptide is Valine--tRNA ligase (Thermobifida fusca (strain YX)).